Here is a 115-residue protein sequence, read N- to C-terminus: uncharacterized protein (115 aa).

Transmembrane regions (helical) follow at residues 1–21, 33–53, and 54–74; these read MFLAGVLCMCAAAASALFGSW, ALALRAMAPTQLAAAVMLAAG, and GVVAVAAPGHTALMVVIVCIA.

The protein to M.leprae ML0030.

It localises to the cell membrane. This is an uncharacterized protein from Mycobacterium tuberculosis (strain CDC 1551 / Oshkosh).